The chain runs to 159 residues: Putative 4-hydroxy-4-methyl-2-oxoglutarate aldolase (159 aa).

Substrate-binding positions include 75-78 and Arg-97; that span reads GDQL. Asp-98 provides a ligand contact to a divalent metal cation.

Belongs to the class II aldolase/RraA-like family. Homotrimer. Requires a divalent metal cation as cofactor.

It carries out the reaction 4-hydroxy-4-methyl-2-oxoglutarate = 2 pyruvate. The catalysed reaction is oxaloacetate + H(+) = pyruvate + CO2. Catalyzes the aldol cleavage of 4-hydroxy-4-methyl-2-oxoglutarate (HMG) into 2 molecules of pyruvate. Also contains a secondary oxaloacetate (OAA) decarboxylase activity due to the common pyruvate enolate transition state formed following C-C bond cleavage in the retro-aldol and decarboxylation reactions. This chain is Putative 4-hydroxy-4-methyl-2-oxoglutarate aldolase, found in Aromatoleum aromaticum (strain DSM 19018 / LMG 30748 / EbN1) (Azoarcus sp. (strain EbN1)).